Consider the following 480-residue polypeptide: ATP synthase subunit beta (480 aa).

158–165 (GGAGVGKT) provides a ligand contact to ATP.

This sequence belongs to the ATPase alpha/beta chains family. As to quaternary structure, F-type ATPases have 2 components, CF(1) - the catalytic core - and CF(0) - the membrane proton channel. CF(1) has five subunits: alpha(3), beta(3), gamma(1), delta(1), epsilon(1). CF(0) has three main subunits: a(1), b(2) and c(9-12). The alpha and beta chains form an alternating ring which encloses part of the gamma chain. CF(1) is attached to CF(0) by a central stalk formed by the gamma and epsilon chains, while a peripheral stalk is formed by the delta and b chains.

The protein localises to the cell inner membrane. It carries out the reaction ATP + H2O + 4 H(+)(in) = ADP + phosphate + 5 H(+)(out). Functionally, produces ATP from ADP in the presence of a proton gradient across the membrane. The catalytic sites are hosted primarily by the beta subunits. In Koribacter versatilis (strain Ellin345), this protein is ATP synthase subunit beta.